Here is a 292-residue protein sequence, read N- to C-terminus: Syntaxin-19 (292 aa).

Over residues 1–24 the composition is skewed to basic and acidic residues; the sequence is MKDRLPELKQRTKETELSKDKDVP. The tract at residues 1–28 is disordered; it reads MKDRLPELKQRTKETELSKDKDVPTTEA. Residues 46 to 122 adopt a coiled-coil conformation; sequence VAERHLHEIQ…VKEVKKSEDE (77 aa). The 63-residue stretch at 209–271 folds into the t-SNARE coiled-coil homology domain; sequence LSEIEQRHKE…NTTKEKFGLA (63 aa).

The protein belongs to the syntaxin family. As to quaternary structure, interacts with EGFR.

It localises to the cell membrane. The protein resides in the cytoplasm. Plays a role in endosomal trafficking of the epidermal growth factor receptor (EGFR). In Bos taurus (Bovine), this protein is Syntaxin-19 (STX19).